Here is a 345-residue protein sequence, read N- to C-terminus: DNA-directed RNA polymerases I and III subunit rpac1 (345 aa).

Residues Met1–Ser11 are compositionally biased toward polar residues. The tract at residues Met1 to Thr20 is disordered.

Belongs to the archaeal Rpo3/eukaryotic RPB3 RNA polymerase subunit family. Component of the RNA polymerase I (Pol I) and RNA polymerase III (Pol III) complexes consisting of at least 13 and 17 subunits, respectively. Interacts with RPAC19/RPAC2.

It localises to the nucleus. Its function is as follows. DNA-dependent RNA polymerase catalyzes the transcription of DNA into RNA using the four ribonucleoside triphosphates as substrates. Common component of RNA polymerases I and III which synthesize ribosomal RNA precursors and small RNAs, such as 5S rRNA and tRNAs, respectively. RPAC1 is part of the Pol core element with the central large cleft and probably a clamp element that moves to open and close the cleft. The chain is DNA-directed RNA polymerases I and III subunit rpac1 (polr1c) from Dictyostelium discoideum (Social amoeba).